Consider the following 234-residue polypeptide: LexA repressor (234 aa).

Positions 41–61 form a DNA-binding region, H-T-H motif; it reads RAEIAAELGFRSPNAAEEHLK. Active-site for autocatalytic cleavage activity residues include S152 and K189.

This sequence belongs to the peptidase S24 family. In terms of assembly, homodimer.

The catalysed reaction is Hydrolysis of Ala-|-Gly bond in repressor LexA.. Its function is as follows. Represses a number of genes involved in the response to DNA damage (SOS response), including recA and lexA. In the presence of single-stranded DNA, RecA interacts with LexA causing an autocatalytic cleavage which disrupts the DNA-binding part of LexA, leading to derepression of the SOS regulon and eventually DNA repair. This is LexA repressor from Polaromonas naphthalenivorans (strain CJ2).